The primary structure comprises 58 residues: Large ribosomal subunit protein bL32 (58 aa).

Belongs to the bacterial ribosomal protein bL32 family.

In Anaplasma marginale (strain Florida), this protein is Large ribosomal subunit protein bL32.